The sequence spans 441 residues: uncharacterized protein (441 aa).

It belongs to the outer membrane factor (OMF) (TC 1.B.17) family.

This is an uncharacterized protein from Haemophilus influenzae (strain ATCC 51907 / DSM 11121 / KW20 / Rd).